A 611-amino-acid chain; its full sequence is Procollagen galactosyltransferase 1-A (611 aa).

The first 24 residues, 1 to 24 (MSQAGVDRLLRGLQLLLLVLRLSA), serve as a signal peptide directing secretion. N85, N173, N312, N370, and N568 each carry an N-linked (GlcNAc...) asparagine glycan. Residues 575–591 (WDRAKSRKTQQQEKLRS) show a composition bias toward basic and acidic residues. A disordered region spans residues 575–611 (WDRAKSRKTQQQEKLRSEALNSPSLGSPFDNTARDEL). The Prevents secretion from ER motif lies at 608-611 (RDEL).

This sequence belongs to the glycosyltransferase 25 family.

The protein localises to the endoplasmic reticulum lumen. The catalysed reaction is (5R)-5-hydroxy-L-lysyl-[collagen] + UDP-alpha-D-galactose = (5R)-5-O-(beta-D-galactosyl)-5-hydroxy-L-lysyl-[collagen] + UDP + H(+). Functionally, beta-galactosyltransferase that transfers beta-galactose to hydroxylysine residues of type I collagen. By acting on collagen glycosylation, facilitates the formation of collagen triple helix. This Xenopus laevis (African clawed frog) protein is Procollagen galactosyltransferase 1-A (colgalt1-a).